We begin with the raw amino-acid sequence, 535 residues long: CTP synthase (535 aa).

The interval 1-268 is amidoligase domain; that stretch reads MSTKYIFVTG…DQIVCDHLKL (268 aa). Ser14 provides a ligand contact to CTP. UTP is bound at residue Ser14. Residue 15–20 coordinates ATP; sequence SMGKGI. Tyr55 is an L-glutamine binding site. An ATP-binding site is contributed by Asp72. 2 residues coordinate Mg(2+): Asp72 and Glu142. CTP contacts are provided by residues 149–151, 189–194, and Lys225; these read DME and KTKIAQ. Residues 189–194 and Lys225 contribute to the UTP site; that span reads KTKIAQ. Position 243 (Val243) interacts with ATP. One can recognise a Glutamine amidotransferase type-1 domain in the interval 293–535; it reads KIALVGKYVE…FIRVAVENSK (243 aa). Residue Gly355 participates in L-glutamine binding. Cys382 functions as the Nucleophile; for glutamine hydrolysis in the catalytic mechanism. Residues 383–386, Glu406, and Arg464 contribute to the L-glutamine site; that span reads LGMQ. Active-site residues include His509 and Glu511.

Belongs to the CTP synthase family. Homotetramer. In contrast to E.coli CTP synthase, remains a tetramer at dilute enzyme concentrations even in the absence of Mg(2+), ATP and UTP.

It carries out the reaction UTP + L-glutamine + ATP + H2O = CTP + L-glutamate + ADP + phosphate + 2 H(+). The enzyme catalyses L-glutamine + H2O = L-glutamate + NH4(+). It catalyses the reaction UTP + NH4(+) + ATP = CTP + ADP + phosphate + 2 H(+). It functions in the pathway pyrimidine metabolism; CTP biosynthesis via de novo pathway; CTP from UDP: step 2/2. With respect to regulation, allosterically activated by GTP, when glutamine is the substrate. GTP has no effect on the reaction when ammonia is the substrate. The allosteric effector GTP functions by stabilizing the protein conformation that binds the tetrahedral intermediate(s) formed during glutamine hydrolysis. Also activated by magnesium. Allosterically inhibited by CTP. Its function is as follows. Catalyzes the ATP-dependent amination of UTP to CTP with either L-glutamine or ammonia as the source of nitrogen. Is essential for the synthesis of CTP de novo. Contrary to other bacterial CTP synthases, the lactococcal enzyme is also able to convert dUTP to dCTP, but this reaction may not play a significant physiological role. Regulates intracellular CTP levels through interactions with the four ribonucleotide triphosphates. This Lactococcus lactis subsp. cremoris (strain MG1363) protein is CTP synthase.